Consider the following 601-residue polypeptide: Probable serine/threonine-protein kinase WNK3 (601 aa).

A Protein kinase domain is found at 34 to 291 (GRFNEILGKG…ARELLDDPFL (258 aa)). ATP-binding positions include 114–117 (TELF) and lysine 164. Aspartate 181 serves as the catalytic Proton acceptor. 2 disordered regions span residues 470–498 (GWRP…PGGA) and 551–601 (ADDD…SEQP). Residues 477–493 (TDDDDDDDLVGGGDDPD) show a composition bias toward acidic residues. The segment covering 560–571 (LQGSSSDTGGSN) has biased composition (polar residues). Over residues 572-583 (HEQHAMGKDKEV) the composition is skewed to basic and acidic residues.

It belongs to the protein kinase superfamily. Ser/Thr protein kinase family. WNK subfamily.

The enzyme catalyses L-seryl-[protein] + ATP = O-phospho-L-seryl-[protein] + ADP + H(+). It catalyses the reaction L-threonyl-[protein] + ATP = O-phospho-L-threonyl-[protein] + ADP + H(+). This chain is Probable serine/threonine-protein kinase WNK3 (WNK3), found in Oryza sativa subsp. japonica (Rice).